The primary structure comprises 377 residues: Rhodopsin, long-wavelength (377 aa).

Residues 1-51 lie on the Extracellular side of the membrane; it reads MIAVSGPSYEAFSYGGQARFNNQTVVDKVPPDMLHLIDANWYQYPPLNPMW. Asparagine 22 carries an N-linked (GlcNAc...) asparagine glycan. A helical membrane pass occupies residues 52–76; the sequence is HGILGFVIGMLGFVSAMGNGMVVYI. At 77–88 the chain is on the cytoplasmic side; the sequence is FLSTKSLRTPSN. The chain crosses the membrane as a helical span at residues 89-113; that stretch reads LFVINLAISNFLMMFCMSPPMVINC. The Extracellular portion of the chain corresponds to 114–128; that stretch reads YYETWVLGPLFCQIY. Cysteine 125 and cysteine 202 form a disulfide bridge. The helical transmembrane segment at 129–148 threads the bilayer; that stretch reads AMLGSLFGCGSIWTMTMIAF. Residues 149 to 167 are Cytoplasmic-facing; sequence DRYNVIVKGLSGKPLSING. A helical membrane pass occupies residues 168–191; that stretch reads ALIRIIAIWLFSLGWTIAPMFGWN. Topologically, residues 192–215 are extracellular; sequence RYVPEGNMTACGTDYFNRGLLSAS. The N-linked (GlcNAc...) asparagine glycan is linked to asparagine 198. Residues 216-243 form a helical membrane-spanning segment; it reads YLVCYGIWVYFVPLFLIIYSYWFIIQAV. At 244 to 278 the chain is on the cytoplasmic side; that stretch reads AAHEKNMREQAKKMNVASLRSSENQNTSAECKLAK. A helical transmembrane segment spans residues 279–302; the sequence is VALMTISLWFMAWTPYLVINFSGI. At 303–309 the chain is on the extracellular side; the sequence is FNLVKIS. Residues 310–334 traverse the membrane as a helical segment; sequence PLFTIWGSLFAKANAVYNPIVYGIS. The residue at position 321 (lysine 321) is an N6-(retinylidene)lysine. At 335 to 377 the chain is on the cytoplasmic side; the sequence is HPKYRAALFAKFPSLACAAEPSSDAVSTTSGTTTVTDNEKSNA. Residues 357-370 show a composition bias toward low complexity; that stretch reads SDAVSTTSGTTTVT. A disordered region spans residues 357 to 377; it reads SDAVSTTSGTTTVTDNEKSNA.

This sequence belongs to the G-protein coupled receptor 1 family. Opsin subfamily. Post-translationally, phosphorylated on some or all of the serine and threonine residues present in the C-terminal region.

It localises to the membrane. In terms of biological role, visual pigments are the light-absorbing molecules that mediate vision. They consist of an apoprotein, opsin, covalently linked to 11-cis-retinal. This chain is Rhodopsin, long-wavelength, found in Apis mellifera (Honeybee).